Consider the following 406-residue polypeptide: 11-beta-hydroxysteroid dehydrogenase type 2 (406 aa).

Residue 82–111 (TRAVLITGCDSGFGKETAKKLDAMGFTVLA) coordinates NAD(+). Ser-219 contacts substrate. Tyr-232 functions as the Proton acceptor in the catalytic mechanism. Positions 379-406 (GQPGATPAPDTAQDNPNPNPDPSLVGAR) are disordered.

Belongs to the short-chain dehydrogenases/reductases (SDR) family. As to quaternary structure, interacts with ligand-free cytoplasmic NR3C2. Highly expressed in the kidney.

The protein localises to the microsome. The protein resides in the endoplasmic reticulum. It catalyses the reaction an 11beta-hydroxysteroid + NAD(+) = an 11-oxosteroid + NADH + H(+). The catalysed reaction is corticosterone + NAD(+) = 11-dehydrocorticosterone + NADH + H(+). The enzyme catalyses cortisol + NAD(+) = cortisone + NADH + H(+). It carries out the reaction 11beta,17beta-dihydroxyandrost-4-ene-3-one + NAD(+) = 17beta-hydroxyandrost-4-ene-3,11-dione + NADH + H(+). It catalyses the reaction 11beta-hydroxyandrost-4-ene-3,17-dione + NAD(+) = androst-4-ene-3,11,17-trione + NADH + H(+). Its pathway is steroid metabolism. Inhibited by carbenoloxone. Its function is as follows. Catalyzes the conversion of biologically active 11beta-hydroxyglucocorticoids (11beta-hydroxysteroid) such as corticosterone, to inactive 11-ketoglucocorticoids (11-oxosteroid) such as 11-dehydrocorticosterone, in the presence of NAD(+). Functions as a dehydrogenase (oxidase), thereby decreasing the concentration of active glucocorticoids, thus protecting the nonselective mineralocorticoid receptor from occupation by glucocorticoids. Plays an important role in maintaining glucocorticoids balance during preimplantation and protects the fetus from excessive maternal corticosterone exposure. Catalyzes the oxidation of 11beta-hydroxytestosterone (11beta,17beta-dihydroxyandrost-4-ene-3-one) to 11-ketotestosterone (17beta-hydroxyandrost-4-ene-3,11-dione), a major bioactive androgen. Catalyzes the conversion of 11beta-hydroxyandrostenedione (11beta-hydroxyandrost-4-ene-3,17-dione) to 11-ketoandrostenedione (androst-4-ene-3,11,17-trione), which can be further metabolized to 11-ketotestosterone. Converts 7-beta-25-dihydroxycholesterol to 7-oxo-25-hydroxycholesterol in vitro. 7-beta-25-dihydroxycholesterol (not 7-oxo-25-hydroxycholesterol) acts as a ligand for the G-protein-coupled receptor (GPCR) Epstein-Barr virus-induced gene 2 (EBI2) and may thereby regulate immune cell migration. May protect ovulating oocytes and fertilizing spermatozoa from the adverse effects of cortisol. This Oryctolagus cuniculus (Rabbit) protein is 11-beta-hydroxysteroid dehydrogenase type 2 (HSD11B2).